We begin with the raw amino-acid sequence, 71 residues long: Large ribosomal subunit protein bL31 (71 aa).

The Zn(2+) site is built by Cys16, Cys18, Cys38, and Cys41.

It belongs to the bacterial ribosomal protein bL31 family. Type A subfamily. Part of the 50S ribosomal subunit. It depends on Zn(2+) as a cofactor.

Its function is as follows. Binds the 23S rRNA. The polypeptide is Large ribosomal subunit protein bL31 (Neisseria gonorrhoeae (strain ATCC 700825 / FA 1090)).